A 335-amino-acid chain; its full sequence is Acetyl-coenzyme A carboxylase carboxyl transferase subunit alpha (335 aa).

The CoA carboxyltransferase C-terminal domain occupies 40–294; it reads QLETLATRRR…KGAIEKHLNE (255 aa).

It belongs to the AccA family. In terms of assembly, acetyl-CoA carboxylase is a heterohexamer composed of biotin carboxyl carrier protein (AccB), biotin carboxylase (AccC) and two subunits each of ACCase subunit alpha (AccA) and ACCase subunit beta (AccD).

Its subcellular location is the cytoplasm. The catalysed reaction is N(6)-carboxybiotinyl-L-lysyl-[protein] + acetyl-CoA = N(6)-biotinyl-L-lysyl-[protein] + malonyl-CoA. Its pathway is lipid metabolism; malonyl-CoA biosynthesis; malonyl-CoA from acetyl-CoA: step 1/1. Component of the acetyl coenzyme A carboxylase (ACC) complex. First, biotin carboxylase catalyzes the carboxylation of biotin on its carrier protein (BCCP) and then the CO(2) group is transferred by the carboxyltransferase to acetyl-CoA to form malonyl-CoA. This chain is Acetyl-coenzyme A carboxylase carboxyl transferase subunit alpha, found in Prochlorococcus marinus subsp. pastoris (strain CCMP1986 / NIES-2087 / MED4).